Here is a 157-residue protein sequence, read N- to C-terminus: uncharacterized protein (157 aa).

This is an uncharacterized protein from Lepidoptera (butterflies and moths).